The sequence spans 1295 residues: DNA (cytosine-5)-methyltransferase CMT2 (1295 aa).

Disordered regions lie at residues 1–23 (MLSP…SSSR), 61–91 (RRST…GKSQ), and 249–287 (NSSK…GKGM). A compositionally biased stretch (polar residues) spans 61–72 (RRSTTLNCNSPE). The BAH domain occupies 578 to 693 (HTFSLGDFAY…VEYSTFQTLR (116 aa)). Residues 727 to 1268 (LPVLDLYSGC…YSLGMAFRGL (542 aa)) form the SAM-dependent MTase C5-type domain. A disordered region spans residues 814–835 (SVNSTKETSGSSSSSDDDSDSE). Residues 837–902 (YEVEKLVDIC…SGFKSKILPL (66 aa)) form the Chromo domain. Cysteine 915 is a catalytic residue.

Belongs to the class I-like SAM-binding methyltransferase superfamily. C5-methyltransferase family.

It is found in the nucleus. It carries out the reaction a 2'-deoxycytidine in DNA + S-adenosyl-L-methionine = a 5-methyl-2'-deoxycytidine in DNA + S-adenosyl-L-homocysteine + H(+). May be involved in the CpXpG methylation and in gene silencing. The protein is DNA (cytosine-5)-methyltransferase CMT2 (CMT2) of Arabidopsis thaliana (Mouse-ear cress).